The following is a 98-amino-acid chain: Integration host factor subunit alpha (98 aa).

The segment at 52-71 is disordered; it reads FDLRDKNQRPGRNPKTGEDI.

This sequence belongs to the bacterial histone-like protein family. Heterodimer of an alpha and a beta chain.

This protein is one of the two subunits of integration host factor, a specific DNA-binding protein that functions in genetic recombination as well as in transcriptional and translational control. This chain is Integration host factor subunit alpha, found in Photorhabdus laumondii subsp. laumondii (strain DSM 15139 / CIP 105565 / TT01) (Photorhabdus luminescens subsp. laumondii).